We begin with the raw amino-acid sequence, 326 residues long: MATFADLPDSVLLEIFSYLPVRDRIRISRVCHHWKKLVDDRWLWRHVDLTLYTMRPKVMWHLLRRYMASRLHSLRMGGYLFSGSQAPQLSPALMRALGQKCPNLKRLCLHVANLSMVPITSLPCTLRTLELHSCEISMAWLHKEQDPTVLPLLECIVLDRVPAFRDEHLQGLTRFRALRSLVLGGTYRVTETGLDMGLQELNYLQRLEVLGCTLSADSTLLAISRHLRDVRKIRLTVRGLSAPGLSVLEGMPALESLCLLGPLVTPEMPSPQEILASCLTMPKLRVLELQGLGWEGQEAERILSKGLPHCMVIVRALPKESMDWWM.

In terms of domain architecture, F-box spans 1–47 (MATFADLPDSVLLEIFSYLPVRDRIRISRVCHHWKKLVDDRWLWRHV). 7 LRR repeats span residues 51 to 78 (LYTM…RMGG), 86 to 111 (APQL…CLHV), 161 to 185 (VPAF…VLGG), 186 to 211 (TYRV…EVLG), 212 to 236 (CTLS…IRLT), 237 to 261 (VRGL…CLLG), and 266 to 291 (PEMP…ELQG).

Interacts with SKP1 and CUL1.

The protein operates within protein modification; protein ubiquitination. Substrate-recognition component of the SCF (SKP1-CUL1-F-box protein)-type E3 ubiquitin ligase complex. Mediates the polyubiquitination and proteasomal degradation of CAMK1 leading to disruption of cyclin D1/CDK4 complex assembly which results in G1 cell cycle arrest in lung epithelia. This is F-box/LRR-repeat protein 12 (FBXL12) from Bos taurus (Bovine).